A 265-amino-acid polypeptide reads, in one-letter code: Silencing boundary-establishment protein FUB1-like protein (265 aa).

Residues 194–265 form a disordered region; sequence HPENRSRNEQ…MPPGSSDMFM (72 aa).

This sequence belongs to the proteasome inhibitor PI31 family. As to quaternary structure, interacts with the 20S proteasome.

The protein localises to the cytoplasm. It localises to the nucleus. May play a role in the establishment of transcriptional silencing boundaries, preventing the propagation of heterochromatic silencing. In Schizosaccharomyces pombe (strain 972 / ATCC 24843) (Fission yeast), this protein is Silencing boundary-establishment protein FUB1-like protein.